The chain runs to 512 residues: Histidine ammonia-lyase (512 aa).

The segment at residues 142-144 (ASG) is a cross-link (5-imidazolinone (Ala-Gly)). Residue Ser143 is modified to 2,3-didehydroalanine (Ser).

The protein belongs to the PAL/histidase family. Contains an active site 4-methylidene-imidazol-5-one (MIO), which is formed autocatalytically by cyclization and dehydration of residues Ala-Ser-Gly.

Its subcellular location is the cytoplasm. It carries out the reaction L-histidine = trans-urocanate + NH4(+). The protein operates within amino-acid degradation; L-histidine degradation into L-glutamate; N-formimidoyl-L-glutamate from L-histidine: step 1/3. This is Histidine ammonia-lyase from Bartonella henselae (strain ATCC 49882 / DSM 28221 / CCUG 30454 / Houston 1) (Rochalimaea henselae).